A 484-amino-acid chain; its full sequence is Tubulin-like protein TubZ (484 aa).

32 to 33 is a GTP binding site; the sequence is QK. D64 lines the Mg(2+) pocket. GTP-binding positions include 140 to 142, N213, K237, and N241; that span reads GVG. The required to bind TubR-DNA complex stretch occupies residues 408–484; it reads RKQDEEKVDI…LKTSNPFKKR (77 aa). A disordered region spans residues 428-484; that stretch reads TFNPYNKNQGFGGASRFSGGKNSAFKRQTSEATSTQNQQEEENIISTLKTSNPFKKR. Positions 452–484 are enriched in polar residues; that stretch reads FKRQTSEATSTQNQQEEENIISTLKTSNPFKKR.

The protein belongs to the FtsZ family. TubZ subfamily. In terms of assembly, forms filaments; a 2-stranded filament forms with the non-hydrolyzable GTP-gamma-S which is probably a precursor to the 4-stranded filament that forms in the presence of GTP. The 4-stranded form binds GDP. In vivo polymerizes to form dynamic filaments that often extend from one cell pole to the other, moving in a unidirectional manner. Filaments polymerize at the plus end and depolymerize at the minus end, a process called treadmilling. Polymerization only occurs above a critical concentration, it does not require upstream tubR. The tubC DNA-TubR complex binds to TubZ. Mg(2+) serves as cofactor.

The protein resides in the cytoplasm. The catalysed reaction is GTP + H2O = GDP + phosphate + H(+). Its activity is regulated as follows. GTPase is inhibited by GTP-gamma-S, which also stabilizes filaments. In terms of biological role, a tubulin-like, filament forming GTPase; the motor component of the type III plasmid partition system which ensures correct segregation of the pBtoxis plasmid. Filaments may seed from the centromere-like site (tubC) when bound by DNA-binding protein TubR; the tubC-TubR complex stabilizes the TubZ filament. Filaments grow at the plus end and depolymerize at the minus end, a process called treadmilling. TubR-tubC complexes track the depolymerizing minus end of the filament, probably pulling plasmid within the cell. Required for pBtoxis plasmid replication/partition. Binds the TubR-tubC complex; GTP is not required for binding to TubR-tubC. TubZ alone does not bind DNA. Has a high GTPase activity in the presence of Mg(2+); in the presence of GTP assembles into dynamic filaments which upon polymerization bind almost exclusively GDP. Filament formation is cooperative, requiring a critical concentration. Formation occurs very quickly and is followed by disassembly as GTP is consumed. The chain is Tubulin-like protein TubZ from Bacillus thuringiensis subsp. israelensis.